Consider the following 149-residue polypeptide: Hydroalkoxylation enzyme phnH (149 aa).

A signal peptide spans 1–18; sequence MKFTYLVSLAAFAVTALG. Residues N33 and N127 are each glycosylated (N-linked (GlcNAc...) asparagine).

In terms of assembly, homotetramer.

The enzyme catalyses 2,4,7,9-tetrahydroxy-6-methyl-8-(2-methylbut-3-en-2-yl)-1-oxo-1H-phenalen-3-ol = (2'R)-atrovenetin. It participates in secondary metabolite biosynthesis. Its function is as follows. Hydroalkoxylation enzyme; part of the gene cluster that mediates the biosynthesis of phenalenones such as herqueinone, compounds that have been reported to treat tumors, bacterial infections and/or mycoses, and rheumatic diseases. The non-reducing polyketide synthase phnA synthesizes the heptaketide backbone and cyclizes it into the angular, hemiketal-containing naphtho-gamma-pyrone prephenalenone. The product template (PT) domain of phnA catalyzes only the C4-C9 aldol condensation, which is unprecedented among known PT domains. The transformation of prephenalenone to phenalenones requires an FAD-dependent monooxygenase phnB, which catalyzes the C2 aromatic hydroxylation of prephenalenone and ring opening of the gamma-pyrone ring simultaneously. Subsequent intramolecular deprotonation of C3 phenolic oxygen accelerates phenalenone ring closure to yield the tricyclic phenalenone core with a C2 hydroxylation. The prenyltransferase phnF further catalyzes reverse C-prenylation of phenalenone by direct electrophilic substitution at C6, or possibly via first a forward O-prenylation of a neighboring phenol in phenalenone, followed by a Claisen rearrangement. The hydroalkoxylation enzyme phnH catalyzes the 5-exo-trig cyclization via acid catalysis after the spontaneous deprotonation of 7-OH, which leads to the formation of the dihydrobenzofuran atrovenetin. Atrovenetin is further converted to deoxyherqueinone by the O-methyltransferase phnC which can methylate C2-OH to stabilize the northern portion of the phenalenone core. Finally, the oxidoreductase phnG converts deoxyherqueinone to herqueinone via C6 hydroxylation. The polypeptide is Hydroalkoxylation enzyme phnH (Penicillium herquei).